Here is a 196-residue protein sequence, read N- to C-terminus: FAD-linked sulfhydryl oxidase ERV2 (196 aa).

Over 1 to 12 the chain is Cytoplasmic; that stretch reads MKQIVKRSHAIR. The helical; Signal-anchor transmembrane segment at 13–35 threads the bilayer; the sequence is IVAALGIIGLWMFFSSNELSIAT. Residues 36 to 196 are Lumenal-facing; that stretch reads PGLIKAKSGI…SLEKEAKQHG (161 aa). In terms of domain architecture, ERV/ALR sulfhydryl oxidase spans 72–174; it reads MGDDKVKKEV…YDCATILEDY (103 aa). Residues Lys-78, Arg-83, and Trp-86 each contribute to the FAD site. An intrachain disulfide couples Cys-121 to Cys-124. Positions 127, 150, 153, 157, 162, and 174 each coordinate FAD. An intrachain disulfide couples Cys-150 to Cys-167. The cysteines at positions 176 and 178 are disulfide-linked.

In terms of assembly, homodimer. Interacts with the substrate protein PDI1, forming transient intermolecular disulfide bridges. Requires FAD as cofactor.

It is found in the endoplasmic reticulum membrane. The catalysed reaction is 2 R'C(R)SH + O2 = R'C(R)S-S(R)CR' + H2O2. In terms of biological role, FAD-dependent sulfhydryl oxidase that catalyzes disulfide bond formation in the endoplasmic reticulum lumen in parallel to ERO1. This is FAD-linked sulfhydryl oxidase ERV2 (ERV2) from Saccharomyces cerevisiae (strain ATCC 204508 / S288c) (Baker's yeast).